The primary structure comprises 483 residues: Regulatory protein ViaA (483 aa).

The protein belongs to the ViaA family. In terms of assembly, homodimer. Interacts with RavA.

Its subcellular location is the cytoplasm. Functionally, component of the RavA-ViaA chaperone complex, which may act on the membrane to optimize the function of some of the respiratory chains. ViaA stimulates the ATPase activity of RavA. This chain is Regulatory protein ViaA, found in Escherichia coli O17:K52:H18 (strain UMN026 / ExPEC).